Reading from the N-terminus, the 152-residue chain is MFRGASAINLDSKGRIAIPTRYRAEIIEQNAGQMVCTVDIRQPCLLLYPLKEWELVEQKLSALANFDLTHRSLQRVMLGYATECELDSAGRILISGPLRLHAKLEKSLMLVGQLNKFEIWSDAEWHAQIEQDMALGASGQFALSEELKMLSL.

SpoVT-AbrB domains are found at residues 5-52 (ASAI…PLKE) and 81-124 (ATEC…SDAE).

The protein belongs to the MraZ family. In terms of assembly, forms oligomers.

The protein localises to the cytoplasm. It is found in the nucleoid. This is Transcriptional regulator MraZ from Pasteurella multocida (strain Pm70).